The chain runs to 71 residues: Small ribosomal subunit protein bS21 (71 aa).

This sequence belongs to the bacterial ribosomal protein bS21 family.

This is Small ribosomal subunit protein bS21 from Blochmanniella pennsylvanica (strain BPEN).